Reading from the N-terminus, the 278-residue chain is Serine protease 57 (278 aa).

An N-terminal signal peptide occupies residues 1–31; it reads MVPGTGGGRDCLTLVVATALTQLLWLPGCCG. The Peptidase S1 domain maps to 34–263; that stretch reads IVGGHEVKPH…FVSWIWDVVR (230 aa). An intrachain disulfide couples cysteine 59 to cysteine 75. Active-site charge relay system residues include histidine 74 and aspartate 122. A glycan (N-linked (GlcNAc...) asparagine) is linked at asparagine 129. Intrachain disulfides connect cysteine 157/cysteine 224, cysteine 188/cysteine 202, and cysteine 214/cysteine 239. The active-site Charge relay system is the serine 218.

The protein belongs to the peptidase S1 family. After cleavage of the signal peptide, the N-terminus is probably further processed by CTSC. Processing by CTSC is probably required for accumulation in cytoplasmic granules; in the absence of CTSC the protein does not accumulate. Post-translationally, N-glycosylated.

The protein resides in the cytoplasmic granule lumen. It localises to the secreted. Serine protease that cleaves preferentially after Arg residues. Can also cleave after citrulline (deimidated arginine) and methylarginine residues. In Rattus norvegicus (Rat), this protein is Serine protease 57 (Prss57).